The primary structure comprises 198 residues: DnaJ homolog subfamily C member 12 (198 aa).

An N-acetylmethionine modification is found at Met-1. A J domain is found at Asp-14–Arg-79. A disordered region spans residues Thr-121 to Gly-183. Positions Asn-126–Glu-156 are enriched in basic and acidic residues. 3 positions are modified to phosphoserine: Ser-160, Ser-166, and Ser-182.

As to quaternary structure, interacts with HSPA8. Interacts with TPH1. Interacts with TPH2.

It localises to the cytoplasm. In terms of biological role, probable co-chaperone that participates in the proper folding of biopterin-dependent aromatic amino acid hydroxylases, which include phenylalanine-4-hydroxylase (PAH), tyrosine 3-monooxygenase (TH) and peripheral and neuronal tryptophan hydroxylases (TPH1 and TPH2). This is DnaJ homolog subfamily C member 12 (Dnajc12) from Rattus norvegicus (Rat).